The sequence spans 222 residues: Cytidylate kinase (222 aa).

Residue 7 to 15 participates in ATP binding; that stretch reads GPSASGKSS.

The protein belongs to the cytidylate kinase family. Type 1 subfamily.

The protein resides in the cytoplasm. It catalyses the reaction CMP + ATP = CDP + ADP. The catalysed reaction is dCMP + ATP = dCDP + ADP. The protein is Cytidylate kinase of Borrelia turicatae (strain 91E135).